Consider the following 554-residue polypeptide: uncharacterized protein (554 aa).

Ca(2+) contacts are provided by Asp-327 and Asn-328.

This sequence belongs to the sulfatase family. Ca(2+) serves as cofactor.

The protein resides in the cytoplasm. It is found in the nucleus. This is an uncharacterized protein from Schizosaccharomyces pombe (strain 972 / ATCC 24843) (Fission yeast).